Here is a 195-residue protein sequence, read N- to C-terminus: Holliday junction branch migration complex subunit RuvA (195 aa).

The tract at residues 1 to 61 (MYEYLDGVVV…ENDQTLYGFK (61 aa)) is domain I. The tract at residues 62 to 139 (KAEDKELFLN…AVENEVGTLF (78 aa)) is domain II. The tract at residues 139–143 (FDLST) is flexible linker. The tract at residues 144-195 (TSNQALDEALEALIALGYSEKEVKKLTKKLSEQTDRTTDQYISSGLKLLMKG) is domain III.

Belongs to the RuvA family. As to quaternary structure, homotetramer. Forms an RuvA(8)-RuvB(12)-Holliday junction (HJ) complex. HJ DNA is sandwiched between 2 RuvA tetramers; dsDNA enters through RuvA and exits via RuvB. An RuvB hexamer assembles on each DNA strand where it exits the tetramer. Each RuvB hexamer is contacted by two RuvA subunits (via domain III) on 2 adjacent RuvB subunits; this complex drives branch migration. In the full resolvosome a probable DNA-RuvA(4)-RuvB(12)-RuvC(2) complex forms which resolves the HJ.

Its subcellular location is the cytoplasm. In terms of biological role, the RuvA-RuvB-RuvC complex processes Holliday junction (HJ) DNA during genetic recombination and DNA repair, while the RuvA-RuvB complex plays an important role in the rescue of blocked DNA replication forks via replication fork reversal (RFR). RuvA specifically binds to HJ cruciform DNA, conferring on it an open structure. The RuvB hexamer acts as an ATP-dependent pump, pulling dsDNA into and through the RuvAB complex. HJ branch migration allows RuvC to scan DNA until it finds its consensus sequence, where it cleaves and resolves the cruciform DNA. In Pediococcus pentosaceus (strain ATCC 25745 / CCUG 21536 / LMG 10740 / 183-1w), this protein is Holliday junction branch migration complex subunit RuvA.